A 262-amino-acid polypeptide reads, in one-letter code: tRNA pseudouridine synthase A (262 aa).

The active-site Nucleophile is Asp-52. Tyr-103 is a binding site for substrate.

The protein belongs to the tRNA pseudouridine synthase TruA family.

The enzyme catalyses uridine(38/39/40) in tRNA = pseudouridine(38/39/40) in tRNA. Its function is as follows. Formation of pseudouridine at positions 38, 39 and 40 in the anticodon stem and loop of transfer RNAs. The polypeptide is tRNA pseudouridine synthase A (Methanococcus maripaludis (strain C6 / ATCC BAA-1332)).